A 180-amino-acid polypeptide reads, in one-letter code: Signal peptidase complex subunit 3 (180 aa).

Residues 1–12 (MHNLLSRANSLL) lie on the Cytoplasmic side of the membrane. A helical; Signal-anchor for type II membrane protein membrane pass occupies residues 13–33 (AFTLWVMAAVTAACFLSTVFL). At 34–180 (DYTVSNHLEV…PTTYTTTRRS (147 aa)) the chain is on the lumenal side. Asparagine 141 carries an N-linked (GlcNAc...) asparagine glycan.

Belongs to the SPCS3 family. Component of the signal peptidase complex (SPC) composed of a catalytic subunit sec-11 and three accessory subunits spcs-1, spcs-2 and spcs-3. The complex induces a local thinning of the ER membrane which is used to measure the length of the signal peptide (SP) h-region of protein substrates. This ensures the selectivity of the complex towards h-regions shorter than 18-20 amino acids.

It localises to the endoplasmic reticulum membrane. In terms of biological role, essential component of the signal peptidase complex (SPC) which catalyzes the cleavage of N-terminal signal sequences from nascent proteins as they are translocated into the lumen of the endoplasmic reticulum. Essential for the SPC catalytic activity, possibly by stabilizing and positioning the active center of the complex close to the lumenal surface. This is Signal peptidase complex subunit 3 from Caenorhabditis briggsae.